The following is a 288-amino-acid chain: Executioner caspase (288 aa).

The active site involves Cys131.

It belongs to the peptidase C14A family.

Its function is as follows. May induce host cell apoptosis and contribute of the establishment of a special cell cleavage process in which apoppotic bodies are rescued by the virus and differentiate to form large vesicles in which virion assembles. The sequence is that of Executioner caspase from Spodoptera frugiperda ascovirus 1a (SfAV-1a).